The chain runs to 739 residues: Phosphoribosylformylglycinamidine synthase subunit PurL (739 aa).

His54 is a catalytic residue. The ATP site is built by Tyr57 and Lys96. Glu98 serves as a coordination point for Mg(2+). Residues 99-102 (SHNH) and Arg121 contribute to the substrate site. The active-site Proton acceptor is His100. Residue Asp122 participates in Mg(2+) binding. Substrate is bound at residue Gln245. Asp273 contacts Mg(2+). 317-319 (ESQ) provides a ligand contact to substrate. The ATP site is built by Asp500 and Gly537. Asn538 serves as a coordination point for Mg(2+). Ser540 contacts substrate.

It belongs to the FGAMS family. Monomer. Part of the FGAM synthase complex composed of 1 PurL, 1 PurQ and 2 PurS subunits.

The protein resides in the cytoplasm. The enzyme catalyses N(2)-formyl-N(1)-(5-phospho-beta-D-ribosyl)glycinamide + L-glutamine + ATP + H2O = 2-formamido-N(1)-(5-O-phospho-beta-D-ribosyl)acetamidine + L-glutamate + ADP + phosphate + H(+). Its pathway is purine metabolism; IMP biosynthesis via de novo pathway; 5-amino-1-(5-phospho-D-ribosyl)imidazole from N(2)-formyl-N(1)-(5-phospho-D-ribosyl)glycinamide: step 1/2. In terms of biological role, part of the phosphoribosylformylglycinamidine synthase complex involved in the purines biosynthetic pathway. Catalyzes the ATP-dependent conversion of formylglycinamide ribonucleotide (FGAR) and glutamine to yield formylglycinamidine ribonucleotide (FGAM) and glutamate. The FGAM synthase complex is composed of three subunits. PurQ produces an ammonia molecule by converting glutamine to glutamate. PurL transfers the ammonia molecule to FGAR to form FGAM in an ATP-dependent manner. PurS interacts with PurQ and PurL and is thought to assist in the transfer of the ammonia molecule from PurQ to PurL. In Bacillus cereus (strain Q1), this protein is Phosphoribosylformylglycinamidine synthase subunit PurL.